We begin with the raw amino-acid sequence, 170 residues long: Protein ripply3 (170 aa).

Positions 40 to 43 (WRPW) match the WRPW motif motif. A ripply homology domain region spans residues 79-114 (HPVRLYMPKSKTSEYLQHMGKKVLANFPVQATIHFY). A compositionally biased stretch (polar residues) spans 143 to 152 (VNSSRGSGDN). A disordered region spans residues 143 to 170 (VNSSRGSGDNYSVPGGPKRNISSHTGSA).

This sequence belongs to the ripply family. Interacts with tbx1 and tle4/grg4.

It localises to the nucleus. Acts as a transcriptional corepressor. Negative regulator of the transcriptional activity of tbx1 that plays a key role in pharyngeal development. Plays a role in the formation of the anteroposterior (AP) axis during embryonic development; required to establish the posterolateral border of the pre-placodal ectoderm (PPE) acting downstream of the retinoic acid receptor (RAR) signaling. This chain is Protein ripply3, found in Xenopus tropicalis (Western clawed frog).